We begin with the raw amino-acid sequence, 417 residues long: Cobalamin binding intrinsic factor (417 aa).

A signal peptide spans 1–18 (MAWLTLYLLSVLWAVAGT). Disulfide bonds link Cys26/Cys246, Cys103/Cys288, and Cys143/Cys182. Asp171 is a binding site for cob(II)alamin. Ser191 carries the phosphoserine modification. Residues Asp222 and Gln270 each coordinate cob(II)alamin. N-linked (GlcNAc...) asparagine glycans are attached at residues Asn311 and Asn330. Cob(II)alamin contacts are provided by residues 365–370 (SWGLIV) and 386–395 (WEFLSGKTPL). An N-linked (GlcNAc...) asparagine glycan is attached at Asn413.

Belongs to the eukaryotic cobalamin transport proteins family. In terms of assembly, interacts with CUBN (via CUB domains). Gastric mucosa.

It is found in the secreted. Functionally, promotes absorption of the essential vitamin cobalamin (Cbl) in the ileum. After interaction with CUBN, the CBLIF-cobalamin complex is internalized via receptor-mediated endocytosis. The chain is Cobalamin binding intrinsic factor (Cblif) from Mus musculus (Mouse).